Consider the following 529-residue polypeptide: DEP domain-containing protein 1B (529 aa).

One can recognise a DEP domain in the interval 24-108 (FRARMPLRRH…DNRHLYRFPP (85 aa)). At S160 the chain carries Phosphoserine. The Rho-GAP domain maps to 201-393 (DSLEEVLNTK…FLMDNYQEIL (193 aa)). At S436 the chain carries Phosphoserine.

The chain is DEP domain-containing protein 1B (Depdc1b) from Mus musculus (Mouse).